The sequence spans 395 residues: Elongation factor Tu (395 aa).

The 195-residue stretch at 10–204 (KPHVNIGTIG…AVDEYIPTPQ (195 aa)) folds into the tr-type G domain. Residues 19-26 (GHVDHGKT) form a G1 region. Position 19-26 (19-26 (GHVDHGKT)) interacts with GTP. Position 26 (Thr-26) interacts with Mg(2+). Residues 60–64 (GITIS) are G2. Positions 81 to 84 (DCPG) are G3. Residues 81–85 (DCPGH) and 136–139 (NKCD) contribute to the GTP site. The interval 136-139 (NKCD) is G4. The G5 stretch occupies residues 174-176 (SAL).

This sequence belongs to the TRAFAC class translation factor GTPase superfamily. Classic translation factor GTPase family. EF-Tu/EF-1A subfamily. Monomer.

It localises to the cytoplasm. The catalysed reaction is GTP + H2O = GDP + phosphate + H(+). Functionally, GTP hydrolase that promotes the GTP-dependent binding of aminoacyl-tRNA to the A-site of ribosomes during protein biosynthesis. In Geobacillus kaustophilus (strain HTA426), this protein is Elongation factor Tu.